The following is a 331-amino-acid chain: MDSLTTALGSVPQVVQWALAGVGALYISAKVLSYLHLVLNLFILGGTNLSKYGKKGSWAVVTGASDGLGKEFASQLAAKGFNIVLVSRTESKLKELAKELEAKNGSLKTKVLAMDYEQDNDDDYEKLGQLLSGLDVAILINNVGRSHSIPVPFLQTPREELQNIVTINCLGTLKTTQVVAPIMAQRKRGLILTMGSFGGWMPTPFLATYSGSKAFLQHWSTSLAEELRSSGVDVHLVLSYLIVSAMSKVRRPSAMVPTPRAFVRSALGKIGCATQNVAYTYTPWWSHAIMQWWVENTIGIGSKIGLQVNLKMHKDIRTRALKKAEREAKKA.

Residues 15–35 (VQWALAGVGALYISAKVLSYL) form a helical membrane-spanning segment. The NADP(+) site is built by Val-60, Asp-115, Asp-123, Asn-142, Tyr-209, Lys-213, Ile-242, and Ser-244. Tyr-209 acts as the Proton donor in catalysis. Residue Lys-213 is the Lowers pKa of active site Tyr of the active site.

Belongs to the short-chain dehydrogenases/reductases (SDR) family.

It is found in the endoplasmic reticulum membrane. The catalysed reaction is a very-long-chain (3R)-3-hydroxyacyl-CoA + NADP(+) = a very-long-chain 3-oxoacyl-CoA + NADPH + H(+). It participates in lipid metabolism; fatty acid biosynthesis. Functionally, component of the microsomal membrane bound fatty acid elongation system, which produces the 26-carbon very long-chain fatty acids (VLCFA) from palmitate. Catalyzes the reduction of the 3-ketoacyl-CoA intermediate that is formed in each cycle of fatty acid elongation. VLCFAs serve as precursors for ceramide and sphingolipids. The chain is Very-long-chain 3-oxoacyl-CoA reductase from Pyricularia oryzae (strain 70-15 / ATCC MYA-4617 / FGSC 8958) (Rice blast fungus).